Reading from the N-terminus, the 746-residue chain is Serine/threonine-protein kinase SMU1 (746 aa).

Disordered stretches follow at residues 1–138 (MSLV…DTLH) and 155–212 (QRSH…GSRN). Low complexity-rich tracts occupy residues 15-54 (SSAN…SSTT) and 85-105 (SVSS…PSSA). Composition is skewed to polar residues over residues 106–121 (LPWS…STAT), 128–138 (RSNTAGPDTLH), and 156–176 (RSHS…SSPT). Basic and acidic residues predominate over residues 194–203 (PSRDRERSRD). The CRIB domain occupies 237-250 (ISTPYDPVHLTHVG). The tract at residues 301–451 (GGSDVWKKMG…RRETKKSTIK (151 aa)) is disordered. The segment covering 370 to 380 (PPSNASTSSAD) has biased composition (polar residues). A compositionally biased stretch (low complexity) spans 414–430 (SPASRAPDAPAAVSAAS). The Protein kinase domain maps to 472 to 723 (YRSLQKIGQG…ALGMLAHPFL (252 aa)). ATP-binding positions include 478–486 (IGQGASGGV) and lysine 501. Aspartate 591 (proton acceptor) is an active-site residue.

Belongs to the protein kinase superfamily. STE Ser/Thr protein kinase family. STE20 subfamily.

It is found in the cytoplasm. It localises to the nucleus. The catalysed reaction is L-seryl-[protein] + ATP = O-phospho-L-seryl-[protein] + ADP + H(+). It catalyses the reaction L-threonyl-[protein] + ATP = O-phospho-L-threonyl-[protein] + ADP + H(+). Functionally, MAP4K component of the MAPK pathway required for the mating pheromone response and the regulation of cell polarity and cell cycle. Phosphorylates histone H2B to form H2BS10ph. The polypeptide is Serine/threonine-protein kinase SMU1 (SMU1) (Mycosarcoma maydis (Corn smut fungus)).